Reading from the N-terminus, the 350-residue chain is Histidinol-phosphate aminotransferase (350 aa).

Lys209 carries the N6-(pyridoxal phosphate)lysine modification.

The protein belongs to the class-II pyridoxal-phosphate-dependent aminotransferase family. Histidinol-phosphate aminotransferase subfamily. In terms of assembly, homodimer. Pyridoxal 5'-phosphate is required as a cofactor.

The enzyme catalyses L-histidinol phosphate + 2-oxoglutarate = 3-(imidazol-4-yl)-2-oxopropyl phosphate + L-glutamate. The protein operates within amino-acid biosynthesis; L-histidine biosynthesis; L-histidine from 5-phospho-alpha-D-ribose 1-diphosphate: step 7/9. In Geobacter sp. (strain M21), this protein is Histidinol-phosphate aminotransferase.